An 809-amino-acid polypeptide reads, in one-letter code: Phenylalanine--tRNA ligase beta subunit (809 aa).

A tRNA-binding domain is found at 39 to 154 (APPTSKIVVG…EDTPVGQDIR (116 aa)). Positions 405-480 (PQRAPVKMRV…RIYGFEKIPA (76 aa)) constitute a B5 domain. Residues Asp458, Asp464, Glu467, and Glu468 each contribute to the Mg(2+) site. Positions 707-808 (SKFPPVRRDI…RMARAGARLR (102 aa)) constitute an FDX-ACB domain.

This sequence belongs to the phenylalanyl-tRNA synthetase beta subunit family. Type 1 subfamily. In terms of assembly, tetramer of two alpha and two beta subunits. Mg(2+) is required as a cofactor.

The protein resides in the cytoplasm. It catalyses the reaction tRNA(Phe) + L-phenylalanine + ATP = L-phenylalanyl-tRNA(Phe) + AMP + diphosphate + H(+). The chain is Phenylalanine--tRNA ligase beta subunit from Burkholderia lata (strain ATCC 17760 / DSM 23089 / LMG 22485 / NCIMB 9086 / R18194 / 383).